The following is a 417-amino-acid chain: Glutamyl-tRNA(Gln) amidotransferase subunit D (417 aa).

The 328-residue stretch at 73-400 (EKVWLLATGG…EEVPRVLTTP (328 aa)) folds into the Asparaginase/glutaminase domain. Catalysis depends on residues Thr-83, Thr-157, Asp-158, and Lys-236.

Belongs to the asparaginase 1 family. GatD subfamily. In terms of assembly, heterodimer of GatD and GatE.

The enzyme catalyses L-glutamyl-tRNA(Gln) + L-glutamine + ATP + H2O = L-glutaminyl-tRNA(Gln) + L-glutamate + ADP + phosphate + H(+). Allows the formation of correctly charged Gln-tRNA(Gln) through the transamidation of misacylated Glu-tRNA(Gln) in organisms which lack glutaminyl-tRNA synthetase. The reaction takes place in the presence of glutamine and ATP through an activated gamma-phospho-Glu-tRNA(Gln). The GatDE system is specific for glutamate and does not act on aspartate. This Pyrobaculum aerophilum (strain ATCC 51768 / DSM 7523 / JCM 9630 / CIP 104966 / NBRC 100827 / IM2) protein is Glutamyl-tRNA(Gln) amidotransferase subunit D.